The following is a 388-amino-acid chain: Deoxyuridine 5'-triphosphate nucleotidohydrolase (388 aa).

A compositionally biased stretch (basic and acidic residues) spans 77-88; it reads EEKYDKEQHPGE. 2 disordered regions span residues 77-96 and 336-388; these read EEKYDKEQHPGEDEASSPLP and THTP…PRHP. Positions 351-363 are enriched in acidic residues; sequence VDDDVDETEEDEK.

This sequence belongs to the dUTPase family. It depends on Mg(2+) as a cofactor.

Its subcellular location is the virion. The enzyme catalyses dUTP + H2O = dUMP + diphosphate + H(+). It functions in the pathway pyrimidine metabolism; dUMP biosynthesis; dUMP from dCTP (dUTP route): step 2/2. Involved in nucleotide metabolism: produces dUMP, the immediate precursor of thymidine nucleotides and decreases the intracellular concentration of dUTP to avoid uracil incorporation into viral DNA. The chain is Deoxyuridine 5'-triphosphate nucleotidohydrolase from Human cytomegalovirus (strain AD169) (HHV-5).